A 141-amino-acid polypeptide reads, in one-letter code: Nucleoside diphosphate kinase (141 aa).

ATP contacts are provided by Lys11, Phe59, Arg87, Thr93, Arg104, and Asn114. The active-site Pros-phosphohistidine intermediate is His117.

It belongs to the NDK family. Homotetramer. It depends on Mg(2+) as a cofactor.

The protein resides in the cytoplasm. It carries out the reaction a 2'-deoxyribonucleoside 5'-diphosphate + ATP = a 2'-deoxyribonucleoside 5'-triphosphate + ADP. It catalyses the reaction a ribonucleoside 5'-diphosphate + ATP = a ribonucleoside 5'-triphosphate + ADP. Its function is as follows. Major role in the synthesis of nucleoside triphosphates other than ATP. The ATP gamma phosphate is transferred to the NDP beta phosphate via a ping-pong mechanism, using a phosphorylated active-site intermediate. This chain is Nucleoside diphosphate kinase, found in Neisseria gonorrhoeae (strain NCCP11945).